The sequence spans 92 residues: Non-specific lipid-transfer protein B (92 aa).

4 disulfide bridges follow: Cys-3/Cys-51, Cys-13/Cys-28, Cys-29/Cys-74, and Cys-49/Cys-88.

Belongs to the plant LTP family.

Plant non-specific lipid-transfer proteins transfer phospholipids as well as galactolipids across membranes. May play a role in wax or cutin deposition in the cell walls of expanding epidermal cells and certain secretory tissues. This is Non-specific lipid-transfer protein B from Ricinus communis (Castor bean).